The sequence spans 242 residues: ATP synthase subunit a (242 aa).

Transmembrane regions (helical) follow at residues 29 to 49 (SSIY…LAFY), 84 to 104 (FIPL…LGMT), 114 to 134 (IIVT…VGFV), 140 to 160 (FLTL…MIVI), 181 to 201 (MAGH…MIYL), and 203 to 223 (FLPI…AILQ).

Belongs to the ATPase A chain family. As to quaternary structure, F-type ATPases have 2 components, CF(1) - the catalytic core - and CF(0) - the membrane proton channel. CF(1) has five subunits: alpha(3), beta(3), gamma(1), delta(1), epsilon(1). CF(0) has three main subunits: a(1), b(2) and c(9-12). The alpha and beta chains form an alternating ring which encloses part of the gamma chain. CF(1) is attached to CF(0) by a central stalk formed by the gamma and epsilon chains, while a peripheral stalk is formed by the delta and b chains.

The protein localises to the cell inner membrane. In terms of biological role, key component of the proton channel; it plays a direct role in the translocation of protons across the membrane. This chain is ATP synthase subunit a, found in Rickettsia rickettsii (strain Sheila Smith).